We begin with the raw amino-acid sequence, 265 residues long: MVVINGVKYACDSCIKSHKAAQCEHNDRPLKILKPRGRPPTTCDHCKDMRKTKNVNPSGSCNCSKLEKIRQEKGITIEEDMLMSGNMDMCLCVRGEPCRCHARRKRTQKSNKKDNLSINSPTNNSPSPALSVNIGGMVVANDDILKSLGPIQNVDLTAPLDFPPNGIDNKPMESFYTQTSKSDAVDSLEFDHLMNMQMRNDNSLSFPMSANQNEVGYQFNNEGNNSMNSTMKNTITQMDQGNSHSMTLHDIDEILNNGIELGNVN.

Residues 1 to 40 constitute a DNA-binding region (copper-fist); it reads MVVINGVKYACDSCIKSHKAAQCEHNDRPLKILKPRGRPP. The Zn(2+) site is built by Cys11, Cys14, Cys23, and His25. The tract at residues 103 to 129 is disordered; that stretch reads RRKRTQKSNKKDNLSINSPTNNSPSPA. Residues 119–128 show a composition bias toward low complexity; it reads NSPTNNSPSP.

The protein resides in the nucleus. Trans-acting regulatory protein that activates transcription of the MT genes (metallothionein) in response to copper or silver ions. This Candida glabrata (strain ATCC 2001 / BCRC 20586 / JCM 3761 / NBRC 0622 / NRRL Y-65 / CBS 138) (Yeast) protein is Metal-activated transcriptional activator protein AMT1 (AMT1).